The chain runs to 509 residues: Putative ATP-dependent RNA helicase QP509L (509 aa).

A Helicase ATP-binding domain is found at 110-262 (KKLLSPYGRF…KIIIHHLGQP (153 aa)). 123 to 130 (LNTGLGKT) lines the ATP pocket. Positions 215 to 218 (DEAH) match the DEAH box motif.

This sequence belongs to the DEAD box helicase family. DEAH subfamily.

The enzyme catalyses ATP + H2O = ADP + phosphate + H(+). This African swine fever virus (strain Badajoz 1971 Vero-adapted) (Ba71V) protein is Putative ATP-dependent RNA helicase QP509L.